The sequence spans 64 residues: Toxin BmCa-1 (64 aa).

An N-terminal signal peptide occupies residues 1 to 18 (MNTFVVVFLLLTAILCHA). Residues 19–27 (EHALDETAR) constitute a propeptide that is removed on maturation. Disulfide bonds link Cys-29-Cys-43, Cys-36-Cys-49, and Cys-42-Cys-58.

It belongs to the scorpion calcin-like family. In terms of tissue distribution, expressed by the venom gland.

Its subcellular location is the secreted. Functionally, may increase intracellular calcium release through the activation of nuclear inositol 1,4,5-trisphosphate receptors (ITPR) of cardiomyocytes, thereby causing an increase in the contraction frequency of these cells. The chain is Toxin BmCa-1 from Olivierus martensii (Manchurian scorpion).